The chain runs to 251 residues: Triosephosphate isomerase (251 aa).

N12–K14 lines the substrate pocket. Residue H98 is the Electrophile of the active site. Residue E168 is the Proton acceptor of the active site. Substrate contacts are provided by residues G174, S213, and G234–G235.

Belongs to the triosephosphate isomerase family. Homodimer.

It is found in the cytoplasm. The enzyme catalyses D-glyceraldehyde 3-phosphate = dihydroxyacetone phosphate. It functions in the pathway carbohydrate biosynthesis; gluconeogenesis. The protein operates within carbohydrate degradation; glycolysis; D-glyceraldehyde 3-phosphate from glycerone phosphate: step 1/1. Its function is as follows. Involved in the gluconeogenesis. Catalyzes stereospecifically the conversion of dihydroxyacetone phosphate (DHAP) to D-glyceraldehyde-3-phosphate (G3P). The chain is Triosephosphate isomerase from Bradyrhizobium diazoefficiens (strain JCM 10833 / BCRC 13528 / IAM 13628 / NBRC 14792 / USDA 110).